The sequence spans 404 residues: Arginine biosynthesis bifunctional protein ArgJ (404 aa).

6 residues coordinate substrate: Thr156, Lys182, Thr193, Glu277, Asn399, and Ser404. Thr193 serves as the catalytic Nucleophile.

It belongs to the ArgJ family. Heterotetramer of two alpha and two beta chains.

Its subcellular location is the cytoplasm. It carries out the reaction N(2)-acetyl-L-ornithine + L-glutamate = N-acetyl-L-glutamate + L-ornithine. The catalysed reaction is L-glutamate + acetyl-CoA = N-acetyl-L-glutamate + CoA + H(+). It participates in amino-acid biosynthesis; L-arginine biosynthesis; L-ornithine and N-acetyl-L-glutamate from L-glutamate and N(2)-acetyl-L-ornithine (cyclic): step 1/1. Its pathway is amino-acid biosynthesis; L-arginine biosynthesis; N(2)-acetyl-L-ornithine from L-glutamate: step 1/4. In terms of biological role, catalyzes two activities which are involved in the cyclic version of arginine biosynthesis: the synthesis of N-acetylglutamate from glutamate and acetyl-CoA as the acetyl donor, and of ornithine by transacetylation between N(2)-acetylornithine and glutamate. The chain is Arginine biosynthesis bifunctional protein ArgJ from Chlorobaculum tepidum (strain ATCC 49652 / DSM 12025 / NBRC 103806 / TLS) (Chlorobium tepidum).